Here is a 137-residue protein sequence, read N- to C-terminus: Small heat shock protein IbpA (137 aa).

Residues 28 to 137 (SQGNGGYPPY…TLKPRRIEIK (110 aa)) enclose the sHSP domain.

This sequence belongs to the small heat shock protein (HSP20) family. Monomer. Forms homomultimers of about 100-150 subunits at optimal growth temperatures. Conformation changes to monomers at high temperatures or high ionic concentrations.

It is found in the cytoplasm. Associates with aggregated proteins, together with IbpB, to stabilize and protect them from irreversible denaturation and extensive proteolysis during heat shock and oxidative stress. Aggregated proteins bound to the IbpAB complex are more efficiently refolded and reactivated by the ATP-dependent chaperone systems ClpB and DnaK/DnaJ/GrpE. Its activity is ATP-independent. This chain is Small heat shock protein IbpA, found in Serratia proteamaculans (strain 568).